A 120-amino-acid polypeptide reads, in one-letter code: Large ribosomal subunit protein uL22 (120 aa).

The interval 1-20 (MFVNRRYTARGKNLPSSPKK) is disordered.

Belongs to the universal ribosomal protein uL22 family. Part of the 50S ribosomal subunit.

In terms of biological role, this protein binds specifically to 23S rRNA; its binding is stimulated by other ribosomal proteins, e.g. L4, L17, and L20. It is important during the early stages of 50S assembly. It makes multiple contacts with different domains of the 23S rRNA in the assembled 50S subunit and ribosome. Its function is as follows. The globular domain of the protein is located near the polypeptide exit tunnel on the outside of the subunit, while an extended beta-hairpin is found that lines the wall of the exit tunnel in the center of the 70S ribosome. This Borrelia hermsii (strain HS1 / DAH) protein is Large ribosomal subunit protein uL22.